The chain runs to 343 residues: Ubiquitin carboxyl-terminal hydrolase isozyme L5 (343 aa).

Residues 6–218 form the UCH catalytic domain; that stretch reads GWCTIESDPG…IRFNLMAVIK (213 aa). The Nucleophile role is filled by Cys-83. His-157 functions as the Proton donor in the catalytic mechanism. The interval 242 to 266 is disordered; it reads LSELNSGSGGDNKEESGGATPTTKE. The 29-residue stretch at 306–334 folds into the ULD domain; that stretch reads NFTPLILNLIKGLAEKDNLQPLIQKAKDQ.

The protein belongs to the peptidase C12 family. Component of the 19S (PA700) regulatory complex of the 26S proteasome.

The protein resides in the cytoplasm. It localises to the nucleus. It carries out the reaction Thiol-dependent hydrolysis of ester, thioester, amide, peptide and isopeptide bonds formed by the C-terminal Gly of ubiquitin (a 76-residue protein attached to proteins as an intracellular targeting signal).. In terms of biological role, protease that specifically cleaves 'Lys-48'-linked polyubiquitin chains. Deubiquitinating enzyme associated with the 19S regulatory subunit of the 26S proteasome. The sequence is that of Ubiquitin carboxyl-terminal hydrolase isozyme L5 (uch2) from Dictyostelium discoideum (Social amoeba).